Reading from the N-terminus, the 245-residue chain is tRNA1(Val) (adenine(37)-N6)-methyltransferase (245 aa).

The protein belongs to the methyltransferase superfamily. tRNA (adenine-N(6)-)-methyltransferase family.

It localises to the cytoplasm. The enzyme catalyses adenosine(37) in tRNA1(Val) + S-adenosyl-L-methionine = N(6)-methyladenosine(37) in tRNA1(Val) + S-adenosyl-L-homocysteine + H(+). Functionally, specifically methylates the adenine in position 37 of tRNA(1)(Val) (anticodon cmo5UAC). The sequence is that of tRNA1(Val) (adenine(37)-N6)-methyltransferase from Escherichia coli O6:K15:H31 (strain 536 / UPEC).